A 641-amino-acid chain; its full sequence is Probable potassium transport system protein Kup 4 (641 aa).

12 consecutive transmembrane segments (helical) span residues 31 to 51 (AALG…LYTL), 64 to 84 (TASA…TISI), 119 to 139 (ILAV…VITP), 155 to 175 (GSLK…FFAA), 183 to 203 (IGAA…VLGL), 221 to 241 (AIGF…GVFL), 265 to 285 (WYAI…ALLI), 298 to 318 (LCPT…TIIA), 355 to 375 (IYVP…TIAF), 381 to 401 (LAGA…CLLF), 412 to 432 (LAVS…FFGA), and 437 to 457 (IAEG…LMLT).

This sequence belongs to the HAK/KUP transporter (TC 2.A.72) family.

Its subcellular location is the cell inner membrane. The enzyme catalyses K(+)(in) + H(+)(in) = K(+)(out) + H(+)(out). Its function is as follows. Transport of potassium into the cell. Likely operates as a K(+):H(+) symporter. This chain is Probable potassium transport system protein Kup 4, found in Bradyrhizobium sp. (strain BTAi1 / ATCC BAA-1182).